A 549-amino-acid polypeptide reads, in one-letter code: Hydroxylamine reductase (549 aa).

Residues C5, C8, C17, and C23 each coordinate [4Fe-4S] cluster. Hybrid [4Fe-2O-2S] cluster contacts are provided by H244, E268, C312, C403, C431, C456, E491, and K493. C403 is subject to Cysteine persulfide.

The protein belongs to the HCP family. Requires [4Fe-4S] cluster as cofactor. Hybrid [4Fe-2O-2S] cluster is required as a cofactor.

It localises to the cytoplasm. It carries out the reaction A + NH4(+) + H2O = hydroxylamine + AH2 + H(+). In terms of biological role, catalyzes the reduction of hydroxylamine to form NH(3) and H(2)O. This is Hydroxylamine reductase from Clostridium perfringens (strain 13 / Type A).